Reading from the N-terminus, the 445-residue chain is UPF0761 membrane protein Mlg_0521 (445 aa).

Helical transmembrane passes span 56–76 (LLAL…FPVF), 112–132 (GLTV…MAAI), 152–172 (FMVY…SLGI), 195–215 (LLAG…YAAV), 225–245 (ALLG…GFGW), and 259–279 (ALAA…VVLV).

This sequence belongs to the UPF0761 family.

It is found in the cell inner membrane. This Alkalilimnicola ehrlichii (strain ATCC BAA-1101 / DSM 17681 / MLHE-1) protein is UPF0761 membrane protein Mlg_0521.